We begin with the raw amino-acid sequence, 187 residues long: Crossover junction endodeoxyribonuclease RuvC (187 aa).

Catalysis depends on residues aspartate 7, glutamate 67, and aspartate 140. Mg(2+)-binding residues include aspartate 7, glutamate 67, and aspartate 140.

This sequence belongs to the RuvC family. Homodimer which binds Holliday junction (HJ) DNA. The HJ becomes 2-fold symmetrical on binding to RuvC with unstacked arms; it has a different conformation from HJ DNA in complex with RuvA. In the full resolvosome a probable DNA-RuvA(4)-RuvB(12)-RuvC(2) complex forms which resolves the HJ. The cofactor is Mg(2+).

It is found in the cytoplasm. It carries out the reaction Endonucleolytic cleavage at a junction such as a reciprocal single-stranded crossover between two homologous DNA duplexes (Holliday junction).. The RuvA-RuvB-RuvC complex processes Holliday junction (HJ) DNA during genetic recombination and DNA repair. Endonuclease that resolves HJ intermediates. Cleaves cruciform DNA by making single-stranded nicks across the HJ at symmetrical positions within the homologous arms, yielding a 5'-phosphate and a 3'-hydroxyl group; requires a central core of homology in the junction. The consensus cleavage sequence is 5'-(A/T)TT(C/G)-3'. Cleavage occurs on the 3'-side of the TT dinucleotide at the point of strand exchange. HJ branch migration catalyzed by RuvA-RuvB allows RuvC to scan DNA until it finds its consensus sequence, where it cleaves and resolves the cruciform DNA. This Chlorobaculum parvum (strain DSM 263 / NCIMB 8327) (Chlorobium vibrioforme subsp. thiosulfatophilum) protein is Crossover junction endodeoxyribonuclease RuvC.